A 161-amino-acid polypeptide reads, in one-letter code: NADH-quinone oxidoreductase subunit I (161 aa).

4Fe-4S ferredoxin-type domains follow at residues 52–82 (LRRY…IESS) and 92–121 (TRYD…QGPN). Cysteine 62, cysteine 65, cysteine 68, cysteine 72, cysteine 101, cysteine 104, cysteine 107, and cysteine 111 together coordinate [4Fe-4S] cluster.

It belongs to the complex I 23 kDa subunit family. As to quaternary structure, NDH-1 is composed of 14 different subunits. Subunits NuoA, H, J, K, L, M, N constitute the membrane sector of the complex. It depends on [4Fe-4S] cluster as a cofactor.

It is found in the cell inner membrane. The enzyme catalyses a quinone + NADH + 5 H(+)(in) = a quinol + NAD(+) + 4 H(+)(out). NDH-1 shuttles electrons from NADH, via FMN and iron-sulfur (Fe-S) centers, to quinones in the respiratory chain. The immediate electron acceptor for the enzyme in this species is believed to be ubiquinone. Couples the redox reaction to proton translocation (for every two electrons transferred, four hydrogen ions are translocated across the cytoplasmic membrane), and thus conserves the redox energy in a proton gradient. In Pelagibacter ubique (strain HTCC1062), this protein is NADH-quinone oxidoreductase subunit I.